A 315-amino-acid polypeptide reads, in one-letter code: Histone-lysine N-methyltransferase SETMAR (315 aa).

The 64-residue stretch at 74–137 folds into the Pre-SET domain; it reads PGCACIKTPC…HCRNRVVQSG (64 aa). Residues C76, C78, C83, C88, C90, C119, C123, C125, and C129 each contribute to the Zn(2+) site. In terms of domain architecture, SET spans 140–264; the sequence is FLLQVFQTEK…PGEELSYDYS (125 aa). Residues 150–152, Y193, R221, and 224–225 contribute to the S-adenosyl-L-methionine site; these read KGW and NH. Zn(2+) contacts are provided by C227, C288, C290, and C295. The Post-SET domain occupies 284–300; the sequence is PRKPCYCGAQSCATFLP.

It belongs to the class V-like SAM-binding methyltransferase superfamily.

The protein localises to the nucleus. Its subcellular location is the chromosome. The enzyme catalyses L-lysyl(36)-[histone H3] + 2 S-adenosyl-L-methionine = N(6),N(6)-dimethyl-L-lysyl(36)-[histone H3] + 2 S-adenosyl-L-homocysteine + 2 H(+). Its function is as follows. Histone methyltransferase that methylates 'Lys-4' and 'Lys-36' of histone H3, 2 specific tags for epigenetic transcriptional activation. Specifically mediates dimethylation of H3 'Lys-36'. The polypeptide is Histone-lysine N-methyltransferase SETMAR (Rattus norvegicus (Rat)).